Here is a 307-residue protein sequence, read N- to C-terminus: Ribosomal RNA small subunit methyltransferase H (307 aa).

S-adenosyl-L-methionine-binding positions include 32 to 34 (GGH), aspartate 52, phenylalanine 78, aspartate 99, and glutamine 106.

Belongs to the methyltransferase superfamily. RsmH family.

Its subcellular location is the cytoplasm. It carries out the reaction cytidine(1402) in 16S rRNA + S-adenosyl-L-methionine = N(4)-methylcytidine(1402) in 16S rRNA + S-adenosyl-L-homocysteine + H(+). Its function is as follows. Specifically methylates the N4 position of cytidine in position 1402 (C1402) of 16S rRNA. The sequence is that of Ribosomal RNA small subunit methyltransferase H from Acinetobacter baumannii (strain SDF).